The sequence spans 209 residues: Max dimerization protein 4 (209 aa).

The segment at 6–23 is interaction with SIN3A and SIN3B; that stretch reads LLILLEAAEYLERRDREA. The region spanning 53-105 is the bHLH domain; the sequence is NNRSSHNELEKHRRAKLRLYLEQLKQLVPLGPDSTRHTTLSLLKRAKVHIKKL. Positions 140–209 are disordered; sequence RVRTDSTGSA…CRRLGRPALS (70 aa). Over residues 153–163 the composition is skewed to acidic residues; that stretch reads DDSEQEVDIEG. Residues 199-209 are compositionally biased toward basic residues; it reads HCRRLGRPALS.

In terms of assembly, efficient DNA binding requires dimerization with another bHLH protein. Binds DNA as a heterodimer with MAX. Interacts with SIN3A AND SIN3B. Interacts with RNF17.

The protein localises to the nucleus. Functionally, transcriptional repressor. Binds with MAX to form a sequence-specific DNA-binding protein complex which recognizes the core sequence 5'-CAC[GA]TG-3'. Antagonizes MYC transcriptional activity by competing for MAX and suppresses MYC dependent cell transformation. The protein is Max dimerization protein 4 (MXD4) of Homo sapiens (Human).